We begin with the raw amino-acid sequence, 126 residues long: Small ribosomal subunit protein uS13 (126 aa).

Residues 94–126 are disordered; sequence GLPVRGQKTRNNAHTVKGKPKAAIAGKKKNKVN. Positions 109-126 are enriched in basic residues; the sequence is VKGKPKAAIAGKKKNKVN.

This sequence belongs to the universal ribosomal protein uS13 family. As to quaternary structure, part of the 30S ribosomal subunit. Forms a loose heterodimer with protein S19. Forms two bridges to the 50S subunit in the 70S ribosome.

Functionally, located at the top of the head of the 30S subunit, it contacts several helices of the 16S rRNA. In the 70S ribosome it contacts the 23S rRNA (bridge B1a) and protein L5 of the 50S subunit (bridge B1b), connecting the 2 subunits; these bridges are implicated in subunit movement. Contacts the tRNAs in the A and P-sites. The protein is Small ribosomal subunit protein uS13 of Aster yellows witches'-broom phytoplasma (strain AYWB).